The following is a 201-amino-acid chain: Glutathione peroxidase 1 (201 aa).

Ser-32 is subject to Phosphoserine. The active site involves Sec-47. Residue Sec-47 is a non-standard amino acid, selenocysteine. Residues Lys-86, Lys-112, and Lys-146 each carry the N6-acetyllysine; alternate modification. Residues Lys-86, Lys-112, and Lys-146 each carry the N6-succinyllysine; alternate modification. Phosphoserine occurs at positions 195 and 199.

The protein belongs to the glutathione peroxidase family. Homotetramer. Interacts with MIEN1. During periods of oxidative stress, Sec-47 may react with a superoxide radical, irreversibly lose hydroselenide and be converted to dehydroalanine.

The protein localises to the cytoplasm. The protein resides in the mitochondrion. It carries out the reaction 2 glutathione + H2O2 = glutathione disulfide + 2 H2O. The enzyme catalyses a hydroperoxy polyunsaturated fatty acid + 2 glutathione = a hydroxy polyunsaturated fatty acid + glutathione disulfide + H2O. The catalysed reaction is tert-butyl hydroperoxide + 2 glutathione = tert-butanol + glutathione disulfide + H2O. It catalyses the reaction cumene hydroperoxide + 2 glutathione = 2-phenylpropan-2-ol + glutathione disulfide + H2O. It carries out the reaction (13S)-hydroperoxy-(9Z,11E)-octadecadienoate + 2 glutathione = (13S)-hydroxy-(9Z,11E)-octadecadienoate + glutathione disulfide + H2O. The enzyme catalyses (9S)-hydroperoxy-(10E,12Z)-octadecadienoate + 2 glutathione = (9S)-hydroxy-(10E,12Z)-octadecadienoate + glutathione disulfide + H2O. The catalysed reaction is (5S)-hydroperoxy-(6E,8Z,11Z,14Z)-eicosatetraenoate + 2 glutathione = (5S)-hydroxy-(6E,8Z,11Z,14Z)-eicosatetraenoate + glutathione disulfide + H2O. It catalyses the reaction (12S)-hydroperoxy-(5Z,8Z,10E,14Z)-eicosatetraenoate + 2 glutathione = (12S)-hydroxy-(5Z,8Z,10E,14Z)-eicosatetraenoate + glutathione disulfide + H2O. It carries out the reaction (12R)-hydroperoxy-(5Z,8Z,10E,14Z)-eicosatetraenoate + 2 glutathione = (12R)-hydroxy-(5Z,8Z,10E,14Z)-eicosatetraenoate + glutathione disulfide + H2O. The enzyme catalyses (15S)-hydroperoxy-(5Z,8Z,11Z,13E)-eicosatetraenoate + 2 glutathione = (15S)-hydroxy-(5Z,8Z,11Z,13E)-eicosatetraenoate + glutathione disulfide + H2O. The catalysed reaction is (5S)-hydroperoxy-(6E,8Z,11Z,14Z,17Z)-eicosapentaenoate + 2 glutathione = (5S)-hydroxy-(6E,8Z,11Z,14Z,17Z)-eicosapentaenoate + glutathione disulfide + H2O. It catalyses the reaction (12S)-hydroperoxy-(5Z,8Z,10E,14Z,17Z)-eicosapentaenoate + 2 glutathione = (12S)-hydroxy-(5Z,8Z,10E,14Z,17Z)-eicosapentaenoate + glutathione disulfide + H2O. It carries out the reaction (15S)-hydroperoxy-(5Z,8Z,11Z,13E,17Z)-eicosapentaenoate + 2 glutathione = (15S)-hydroxy-(5Z,8Z,11Z,13E,17Z)-eicosapentaenoate + glutathione disulfide + H2O. The enzyme catalyses (15S)-hydroperoxy-(11Z,13E)-eicosadienoate + 2 glutathione = (15S)-hydroxy-(11Z,13E)-eicosadienoate + glutathione disulfide + H2O. The catalysed reaction is (17S)-hydroperoxy-(4Z,7Z,10Z,13Z,15E,19Z)-docosahexaenoate + 2 glutathione = (17S)-hydroxy-(4Z,7Z,10Z,13Z,15E,19Z)-docosahexaenoate + glutathione disulfide + H2O. In terms of biological role, catalyzes the reduction of hydroperoxides in a glutathione-dependent manner thus regulating cellular redox homeostasis. Can reduce small soluble hydroperoxides such as H2O2, cumene hydroperoxide and tert-butyl hydroperoxide, as well as several fatty acid-derived hydroperoxides. In platelets catalyzes the reduction of 12-hydroperoxyeicosatetraenoic acid, the primary product of the arachidonate 12-lipoxygenase pathway. This Pan troglodytes (Chimpanzee) protein is Glutathione peroxidase 1 (GPX1).